The primary structure comprises 275 residues: Structure-specific endonuclease subunit SLX1 (275 aa).

In terms of domain architecture, GIY-YIG spans 12-95; it reads RFFGVYLLYC…QHPHASRRLA (84 aa). Residues 148-161 show a composition bias toward pro residues; the sequence is HVPLAFGPPPPQAP. The interval 148-179 is disordered; it reads HVPLAFGPPPPQAPAPRRRAGPFDDAEPEPDQ. The SLX1-type zinc finger occupies 186 to 238; it reads CSLCAQTIQDEEGPLCCPHPGCLLRAHVICLAEEFLQEEPGQLLPLEGQCPCC.

This sequence belongs to the SLX1 family. In terms of assembly, forms a heterodimer with SLX4. The cofactor is a divalent metal cation.

The protein resides in the nucleus. Functionally, catalytic subunit of the SLX1-SLX4 structure-specific endonuclease that resolves DNA secondary structures generated during DNA repair and recombination. Has endonuclease activity towards branched DNA substrates, introducing single-strand cuts in duplex DNA close to junctions with ss-DNA. Has a preference for 5'-flap structures, and promotes symmetrical cleavage of static and migrating Holliday junctions (HJs). Resolves HJs by generating two pairs of ligatable, nicked duplex products. The sequence is that of Structure-specific endonuclease subunit SLX1 from Homo sapiens (Human).